The sequence spans 514 residues: Na(+)/H(+) antiporter NhaB (514 aa).

12 helical membrane-spanning segments follow: residues 23-43 (LALL…PFIA), 63-83 (PLLP…TSAA), 97-117 (LLLM…LFIF), 120-140 (LLLS…AAAF), 144-164 (FLDA…FYGI), 202-222 (LMMH…VGEP), 238-258 (FFLR…LTCM), 303-323 (AIIG…VGLI), 357-377 (LTVF…APII), 391-411 (LFYL…VGTI), 447-467 (ATPN…APLI), and 475-495 (VWMA…CVEF).

This sequence belongs to the NhaB Na(+)/H(+) (TC 2.A.34) antiporter family.

The protein localises to the cell inner membrane. The catalysed reaction is 2 Na(+)(in) + 3 H(+)(out) = 2 Na(+)(out) + 3 H(+)(in). In terms of biological role, na(+)/H(+) antiporter that extrudes sodium in exchange for external protons. The protein is Na(+)/H(+) antiporter NhaB of Salmonella heidelberg (strain SL476).